The following is a 360-amino-acid chain: Peptide chain release factor 1 (360 aa).

Q235 carries the post-translational modification N5-methylglutamine.

The protein belongs to the prokaryotic/mitochondrial release factor family. In terms of processing, methylated by PrmC. Methylation increases the termination efficiency of RF1.

The protein resides in the cytoplasm. In terms of biological role, peptide chain release factor 1 directs the termination of translation in response to the peptide chain termination codons UAG and UAA. The protein is Peptide chain release factor 1 of Burkholderia mallei (strain NCTC 10247).